A 563-amino-acid polypeptide reads, in one-letter code: GTPase Obg (563 aa).

In terms of domain architecture, Obg spans 2 to 168 (SDFVDRVTVH…RDVILELKSI (167 aa)). The OBG-type G domain maps to 169–349 (ADVALVGFPS…LNFALSALVH (181 aa)). GTP contacts are provided by residues 175–182 (GFPSAGKS), 200–204 (FTTLV), 221–224 (DVPG), 301–304 (NKID), and 330–332 (STA). Mg(2+) is bound by residues S182 and T202. The OCT domain occupies 383–469 (DEGGSALEFT…ARMVEFDWDP (87 aa)). Positions 529–563 (RKAGHWADPTVDDDRHDETSLFGHGESSEDGETEE) are disordered.

This sequence belongs to the TRAFAC class OBG-HflX-like GTPase superfamily. OBG GTPase family. As to quaternary structure, monomer. It depends on Mg(2+) as a cofactor.

The protein localises to the cytoplasm. Its function is as follows. An essential GTPase which binds GTP, GDP and possibly (p)ppGpp with moderate affinity, with high nucleotide exchange rates and a fairly low GTP hydrolysis rate. Plays a role in control of the cell cycle, stress response, ribosome biogenesis and in those bacteria that undergo differentiation, in morphogenesis control. The polypeptide is GTPase Obg (Bifidobacterium longum (strain NCC 2705)).